We begin with the raw amino-acid sequence, 247 residues long: DNA polymerase sliding clamp (247 aa).

It belongs to the PCNA family. Homotrimer. The subunits circularize to form a toroid; DNA passes through its center. Replication factor C (RFC) is required to load the toroid on the DNA.

Functionally, sliding clamp subunit that acts as a moving platform for DNA processing. Responsible for tethering the catalytic subunit of DNA polymerase and other proteins to DNA during high-speed replication. This is DNA polymerase sliding clamp from Natronomonas pharaonis (strain ATCC 35678 / DSM 2160 / CIP 103997 / JCM 8858 / NBRC 14720 / NCIMB 2260 / Gabara) (Halobacterium pharaonis).